The sequence spans 263 residues: Proenkephalin-A (263 aa).

The first 24 residues, 1 to 24 (MARFLGLCTWLLALGPGLLATVRA), serve as a signal peptide directing secretion. 3 disulfide bridges follow: cysteine 26–cysteine 48, cysteine 30–cysteine 52, and cysteine 33–cysteine 65. 2 propeptides span residues 192-203 (SPHLEDETKELQ) and 213-223 (VGRPEWWMDYQ). Serine 247 carries the phosphoserine modification.

Belongs to the opioid neuropeptide precursor family. In terms of processing, proenkephalin-A is cleaved by CTSL to generate Met-enkephalin. Processed and degraded by ACE. Post-translationally, probably cleaved by ACE. In terms of processing, processed by ACE to generate Met-enkephalin in the nucleus accumbens of the brain. The N-terminal domain contains 6 conserved cysteines thought to be involved in disulfide bonding and/or processing. As to expression, secreted by neuroendocrine chromaffin cells through cromaffin granules.

Its subcellular location is the cytoplasmic vesicle. The protein resides in the secretory vesicle. The protein localises to the chromaffin granule lumen. It is found in the secreted. Neuropeptide that competes with and mimic the effects of opiate drugs. They play a role in a number of physiologic functions, including pain perception and responses to stress. Its function is as follows. Met-enkephalin-Arg-Phe neuropeptide acts as a strong ligand of Mu-type opioid receptor OPRM1. Met-enkephalin-Arg-Phe-binding to OPRM1 in the nucleus accumbens of the brain increases activation of OPRM1, leading to long-term synaptic depression of glutamate release. Functionally, increases glutamate release in the striatum and decreases GABA concentration in the striatum. In terms of biological role, increases glutamate release in the striatum. Enkelytin possesses antibacterial activity against Gram-positive bacteria such as Micrococcus luteus and Bacillus megaterium. In Bos taurus (Bovine), this protein is Proenkephalin-A (PENK).